A 250-amino-acid chain; its full sequence is Small ribosomal subunit protein uS3 (250 aa).

Residues V39–D107 form the KH type-2 domain. The tract at residues M215–E250 is disordered. Over residues A220 to E250 the composition is skewed to basic and acidic residues.

This sequence belongs to the universal ribosomal protein uS3 family. In terms of assembly, part of the 30S ribosomal subunit. Forms a tight complex with proteins S10 and S14.

In terms of biological role, binds the lower part of the 30S subunit head. Binds mRNA in the 70S ribosome, positioning it for translation. The protein is Small ribosomal subunit protein uS3 of Acinetobacter baumannii (strain AB307-0294).